Here is a 514-residue protein sequence, read N- to C-terminus: MVVPFKNEPGIDFSVQTNVERFNEELRKVKAQLGQDIPLVINGEKLTKTDTFNSVNPANTSQLIAKVSKATQDDIEKAFESANHAYQSWKKWSHKDRAELLLRVAAIIRRRKEEISAIMVYEAGKPWDEAVGDAAEGIDFIEYYARSMMELADGKPVLDREGEHNRYFYKPIGTGVTIPPWNFPFAIMAGTTLAPVVAGNTVLLKPAEDTVLTAYKLMEILEEAGLPQGVVNFVPGDPKEIGDYLVDHKDTHFVTFTGSRATGTRIYERSAVVQEGQQFLKRVIAEMGGKDAIVVDNNVDTDLAAEAIVTSAFGFSGQKCSACSRAIVHQDVHDEILEKAIQLTQKLTLGNTEENTFMGPVINQKQFDKIKNYIEIGKKEGKLETGGGTDDSTGYFIEPTIFSGLQSADRIMQEEIFGPVVGFIKVKDFDEAIEVANDTDYGLTGAVITNHREHWIKAVNEFDVGNLYLNRGCTAAVVGYHPFGGFKMSGTDAKTGSPDYLLNFLEQKVVSEMF.

Active-site residues include E286 and C320.

This sequence belongs to the aldehyde dehydrogenase family. RocA subfamily.

The enzyme catalyses L-glutamate 5-semialdehyde + NAD(+) + H2O = L-glutamate + NADH + 2 H(+). Its pathway is amino-acid degradation; L-proline degradation into L-glutamate; L-glutamate from L-proline: step 2/2. The chain is 1-pyrroline-5-carboxylate dehydrogenase from Staphylococcus epidermidis (strain ATCC 12228 / FDA PCI 1200).